The chain runs to 960 residues: Anoctamin-1 (960 aa).

The Cytoplasmic segment spans residues 1 to 333 (MRVPEKYSTL…FGEKVGLYFA (333 aa)). A disordered region spans residues 92 to 115 (TRSVRQDQPLPGKGSPVDAGSPEV). Ser-196 carries the post-translational modification Phosphoserine. The helical transmembrane segment at 334–354 (WLGAYTQMLIPASIVGVIVFL) threads the bilayer. The Extracellular segment spans residues 355–406 (YGCATVDENIPSMEMCDQRYNITMCPLCDKTCSYWKMSSACATARASHLFDN). 4 cysteine pairs are disulfide-bonded: Cys-370-Cys-395, Cys-379-Cys-836, Cys-382-Cys-386, and Cys-625-Cys-630. Residues 407–427 (PATVFFSVFMALWAATFMEHW) traverse the membrane as a helical segment. A Ca(2+)-binding site is contributed by Glu-425. Residues 428–493 (KRKQMRLNYR…RDRFPAYFTN (66 aa)) are Cytoplasmic-facing. The chain crosses the membrane as a helical span at residues 494 to 514 (LVSIIFMIAVTFAIVLGVIIY). Residues 515 to 542 (RISTAAALAMNSSPSVRSNIRVTVTATA) lie on the Extracellular side of the membrane. The chain crosses the membrane as a helical span at residues 543–563 (VIINLVVIILLDEVYGCIARW). Residues 564 to 581 (LTKIEVPKTEKSFEERLT) lie on the Cytoplasmic side of the membrane. A helical transmembrane segment spans residues 582–602 (FKAFLLKFVNSYTPIFYVAFF). Residues 603 to 631 (KGRFVGRPGDYVYIFRSFRMEECAPGGCL) lie on the Extracellular side of the membrane. A helical transmembrane segment spans residues 632–652 (MELCIQLSIIMLGKQLIQNNL). Positions 651, 654, 702, 705, 734, and 738 each coordinate Ca(2+). Residues 653 to 699 (FEIGIPKMKKFIRYLKLRRQSPSDREEYVKRKQRYEVDFNLEPFAGL) lie on the Cytoplasmic side of the membrane. 2 consecutive transmembrane segments (helical) span residues 700-720 (TPEY…VASF) and 721-741 (PLAP…DAKK). At 742 to 758 (FVTELRRPVAIRAKDIG) the chain is on the cytoplasmic side. A helical transmembrane segment spans residues 759–779 (IWYNILRGVGKLAVIINAFVI). Over 780–866 (SFTSDFIPRL…FWAVLAARLA (87 aa)) the chain is Extracellular. N-linked (GlcNAc...) asparagine glycosylation occurs at Asn-806. A helical transmembrane segment spans residues 867 to 887 (FVIVFQNLVMFMSDFVDWVIP). 2 residues coordinate Ca(2+): Asp-883 and Asp-888. Residues 888 to 960 (DIPKDISQQI…PSYEYHGDAL (73 aa)) are Cytoplasmic-facing. Positions 928 to 960 (PRDVPCNNHSPTTHPEAGDGSPVPSYEYHGDAL) are disordered.

Belongs to the anoctamin family. Homodimer. Interacts with CFTR. Interacts with TRPV4. In terms of tissue distribution, expressed at the apical surface of the vomeronasal epithelium (at protein level). Expressed in the lateral and septal nasal glands (at protein level). Highly expressed in pulmonary bronchiole epithelial cells, pancreatic and submandibular gland acinar cells, kidney proximal tubule, all retinal cell layers, most sensory cells of dorsal root ganglia, Leydig cells and spermatocytes (at protein level). In the dorsal root ganglia, detected in small-diameter nociceptive neurons and in larger myelinated neurons (at protein level). In the dorsal root ganglia, expressed in MrgprA3-positive neurons (at protein level). In the developing brain, highly expressed in the ventricular zone and subventricular zone at 12.5 dpc and 14.5 dpc where it is detected in radial glial cells but not in neurons with expression dramatically decreased at P1 (at protein level). Highly expressed in the endometrial stroma (at protein level). In taste buds of the vallate papillae, expressed in the apical region of type I taste cells (at protein level). In the kidney, expressed in the collecting duct (at protein level). In the retina, strongly expressed in the outer and inner plexiform layers, weakly expressed in some somata in the inner nuclear layer and ganglion cell layer and not expressed in the outer nuclear layer (at protein level). Expressed in various retinal neurons including rod bipolar cells (at protein level). Expressed in eye, brain, myometrium and endometrium with higher levels in endometrium than myometrium in estrus and day 18 pregnant mice. Not detected in uterine smooth muscle cells. Expressed at high levels in the thyroid gland and gastrointestinal muscles.

It localises to the apical cell membrane. Its subcellular location is the presynapse. The enzyme catalyses chloride(in) = chloride(out). With respect to regulation, ATP and calmodulin are essential for its activation. Channel activity is inhibited by CFTR protein and by chloride inhibitors such as niflumic acid (NFA) and 4,4'-diisothiocyanatostilbene-2,2'-disulfonic acid (DIDS). Activated by heat with activation seen at temperatures above 44 degrees Celsius. Activated by BDNF in radial glial cells. Functionally, calcium-activated chloride channel (CaCC). Plays a role in transepithelial anion transport and smooth muscle contraction. Required for the normal functioning of the interstitial cells of Cajal (ICCs) which generate electrical pacemaker activity in gastrointestinal smooth muscles. Acts as a major contributor to basal and stimulated chloride conductance in airway epithelial cells and plays an important role in tracheal cartilage development. Required for CFTR activation by enhancing endoplasmic reticulum Ca(2+) store release and is also required for CFTR membrane expression. Required for basal and ATP-dependent mucus secretion in airways and intestine, probably by controlling exocytosis of mucus-filled granules by providing Ca(2+) to an apical signaling compartment. Contributes to airway mucus expression induced by interleukins IL3 and IL8 and by the asthma-associated protein CLCA1 and is required for expression of mucin MUC5AC. However, was shown in another study not to be required for MUC5AC expression. Plays a role in the propagation of Ca(2+) waves in Kolliker's organ in the cochlea and contributes to the refinement of auditory brainstem circuitries prior to hearing onset. In vomeronasal sensory neurons, modulates spontaneous firing patterns in the absence of stimuli as well as the firing pattern of pheromone-evoked activity. Responsible for calcium-activated chloride channel activity in type I taste cells of the vallate papillae. Acts as a heat sensor in nociceptive neurons. In dorsal root ganglion neurons, plays a role in mediating non-histaminergic Mas-related G-protein coupled receptor (MRGPR)-dependent itching, acting as a downstream effector of MRGPRs. In the developing brain, required for the Ca(2+)-dependent process extension of radial glial cells. The polypeptide is Anoctamin-1 (Ano1) (Mus musculus (Mouse)).